A 158-amino-acid polypeptide reads, in one-letter code: uncharacterized protein (158 aa).

2 consecutive transmembrane segments (helical) span residues 10-30 (LSSLAAIIFAQVIKVPIQFIV) and 137-157 (IEVFFGGLTGILLTLVLAYFF).

The protein resides in the cell membrane. This is an uncharacterized protein from Bacillus subtilis (strain 168).